The primary structure comprises 233 residues: C-type lectin domain family 2 member D5 (233 aa).

The interval 1–52 is disordered; it reads MPSSAHLQDPPPLLSRTLTQNEGQTSLRQSSSCGPSAASASESLSGSTESRI. The Cytoplasmic portion of the chain corresponds to 1–76; the sequence is MPSSAHLQDP…PLEYPAGLYC (76 aa). Polar residues predominate over residues 16–29; that stretch reads RTLTQNEGQTSLRQ. Positions 30–50 are enriched in low complexity; that stretch reads SSSCGPSAASASESLSGSTES. A helical; Signal-anchor for type II membrane protein membrane pass occupies residues 77 to 97; it reads CYVVIIVLSVAVVALSVALSV. The Extracellular portion of the chain corresponds to 98-233; that stretch reads KKTAQISTIN…KPNSYTSQCL (136 aa). Positions 119–228 constitute a C-type lectin domain; that stretch reads VGNKCFYFNE…KSICRKPNSY (110 aa). Residue asparagine 132 is glycosylated (N-linked (GlcNAc...) asparagine).

Its subcellular location is the cell membrane. Functionally, lectin-type cell surface receptor. This is C-type lectin domain family 2 member D5 (Ocil) from Rattus norvegicus (Rat).